Consider the following 473-residue polypeptide: Probable glycine dehydrogenase (decarboxylating) subunit 2 (473 aa).

Positions 1-40 (MEHYEQARYAPAEGETNEPLLSENDQTTVSVDPSLPDDLT) are disordered. Lys270 is subject to N6-(pyridoxal phosphate)lysine.

It belongs to the GcvP family. C-terminal subunit subfamily. In terms of assembly, the glycine cleavage system is composed of four proteins: P, T, L and H. In this organism, the P 'protein' is a heterodimer of two subunits. Pyridoxal 5'-phosphate serves as cofactor.

It carries out the reaction N(6)-[(R)-lipoyl]-L-lysyl-[glycine-cleavage complex H protein] + glycine + H(+) = N(6)-[(R)-S(8)-aminomethyldihydrolipoyl]-L-lysyl-[glycine-cleavage complex H protein] + CO2. In terms of biological role, the glycine cleavage system catalyzes the degradation of glycine. The P protein binds the alpha-amino group of glycine through its pyridoxal phosphate cofactor; CO(2) is released and the remaining methylamine moiety is then transferred to the lipoamide cofactor of the H protein. This Halobacterium salinarum (strain ATCC 700922 / JCM 11081 / NRC-1) (Halobacterium halobium) protein is Probable glycine dehydrogenase (decarboxylating) subunit 2.